Reading from the N-terminus, the 482-residue chain is tRNA sulfurtransferase (482 aa).

A THUMP domain is found at 61–165 (LAIRDALTRI…DDRLLLIKGR (105 aa)). ATP is bound by residues 183–184 (LI), lysine 265, glycine 287, and glutamine 296. Cysteine 344 and cysteine 456 form a disulfide bridge. Positions 404 to 482 (FGANDVILDI…GFANVKVYRP (79 aa)) constitute a Rhodanese domain. Catalysis depends on cysteine 456, which acts as the Cysteine persulfide intermediate.

It belongs to the ThiI family.

The protein localises to the cytoplasm. The catalysed reaction is [ThiI sulfur-carrier protein]-S-sulfanyl-L-cysteine + a uridine in tRNA + 2 reduced [2Fe-2S]-[ferredoxin] + ATP + H(+) = [ThiI sulfur-carrier protein]-L-cysteine + a 4-thiouridine in tRNA + 2 oxidized [2Fe-2S]-[ferredoxin] + AMP + diphosphate. It catalyses the reaction [ThiS sulfur-carrier protein]-C-terminal Gly-Gly-AMP + S-sulfanyl-L-cysteinyl-[cysteine desulfurase] + AH2 = [ThiS sulfur-carrier protein]-C-terminal-Gly-aminoethanethioate + L-cysteinyl-[cysteine desulfurase] + A + AMP + 2 H(+). It participates in cofactor biosynthesis; thiamine diphosphate biosynthesis. Catalyzes the ATP-dependent transfer of a sulfur to tRNA to produce 4-thiouridine in position 8 of tRNAs, which functions as a near-UV photosensor. Also catalyzes the transfer of sulfur to the sulfur carrier protein ThiS, forming ThiS-thiocarboxylate. This is a step in the synthesis of thiazole, in the thiamine biosynthesis pathway. The sulfur is donated as persulfide by IscS. This chain is tRNA sulfurtransferase, found in Salmonella arizonae (strain ATCC BAA-731 / CDC346-86 / RSK2980).